The sequence spans 694 residues: DNA ligase (694 aa).

Residues 41–45 (DAEFD), 91–92 (SL), and Glu121 contribute to the NAD(+) site. Lys123 serves as the catalytic N6-AMP-lysine intermediate. 4 residues coordinate NAD(+): Arg144, Glu184, Lys300, and Lys324. Zn(2+) contacts are provided by Cys418, Cys421, Cys437, and Cys443. The region spanning 607–694 (SVLPTCEGLT…QGPPVQQVVD (88 aa)) is the BRCT domain.

This sequence belongs to the NAD-dependent DNA ligase family. LigA subfamily. It depends on Mg(2+) as a cofactor. Mn(2+) is required as a cofactor.

It catalyses the reaction NAD(+) + (deoxyribonucleotide)n-3'-hydroxyl + 5'-phospho-(deoxyribonucleotide)m = (deoxyribonucleotide)n+m + AMP + beta-nicotinamide D-nucleotide.. DNA ligase that catalyzes the formation of phosphodiester linkages between 5'-phosphoryl and 3'-hydroxyl groups in double-stranded DNA using NAD as a coenzyme and as the energy source for the reaction. It is essential for DNA replication and repair of damaged DNA. The sequence is that of DNA ligase from Mycobacterium leprae (strain TN).